Reading from the N-terminus, the 70-residue chain is uncharacterized protein (70 aa).

Residues 4–24 form a helical membrane-spanning segment; that stretch reads VKTIAMLAMLVIVAALIYMGY.

Its subcellular location is the host membrane. This is an uncharacterized protein from Dryophytes versicolor (chameleon treefrog).